Consider the following 358-residue polypeptide: Uroporphyrinogen decarboxylase (358 aa).

Substrate contacts are provided by residues 36–40 (RQAGR), D85, Y160, S215, and H338.

This sequence belongs to the uroporphyrinogen decarboxylase family. Homodimer.

The protein resides in the cytoplasm. The catalysed reaction is uroporphyrinogen III + 4 H(+) = coproporphyrinogen III + 4 CO2. It participates in porphyrin-containing compound metabolism; protoporphyrin-IX biosynthesis; coproporphyrinogen-III from 5-aminolevulinate: step 4/4. Its function is as follows. Catalyzes the decarboxylation of four acetate groups of uroporphyrinogen-III to yield coproporphyrinogen-III. In Corynebacterium glutamicum (strain ATCC 13032 / DSM 20300 / JCM 1318 / BCRC 11384 / CCUG 27702 / LMG 3730 / NBRC 12168 / NCIMB 10025 / NRRL B-2784 / 534), this protein is Uroporphyrinogen decarboxylase.